Reading from the N-terminus, the 524-residue chain is Bifunctional purine biosynthesis protein PurH (524 aa).

The MGS-like domain occupies 1–144 (MTRRALVSVS…KNSAHVGVVV (144 aa)).

Belongs to the PurH family.

The enzyme catalyses (6R)-10-formyltetrahydrofolate + 5-amino-1-(5-phospho-beta-D-ribosyl)imidazole-4-carboxamide = 5-formamido-1-(5-phospho-D-ribosyl)imidazole-4-carboxamide + (6S)-5,6,7,8-tetrahydrofolate. It catalyses the reaction IMP + H2O = 5-formamido-1-(5-phospho-D-ribosyl)imidazole-4-carboxamide. The protein operates within purine metabolism; IMP biosynthesis via de novo pathway; 5-formamido-1-(5-phospho-D-ribosyl)imidazole-4-carboxamide from 5-amino-1-(5-phospho-D-ribosyl)imidazole-4-carboxamide (10-formyl THF route): step 1/1. It participates in purine metabolism; IMP biosynthesis via de novo pathway; IMP from 5-formamido-1-(5-phospho-D-ribosyl)imidazole-4-carboxamide: step 1/1. The protein is Bifunctional purine biosynthesis protein PurH of Anaeromyxobacter dehalogenans (strain 2CP-C).